We begin with the raw amino-acid sequence, 186 residues long: Elongation factor P (186 aa).

The protein belongs to the elongation factor P family.

Its subcellular location is the cytoplasm. It functions in the pathway protein biosynthesis; polypeptide chain elongation. Its function is as follows. Involved in peptide bond synthesis. Stimulates efficient translation and peptide-bond synthesis on native or reconstituted 70S ribosomes in vitro. Probably functions indirectly by altering the affinity of the ribosome for aminoacyl-tRNA, thus increasing their reactivity as acceptors for peptidyl transferase. The polypeptide is Elongation factor P (Elusimicrobium minutum (strain Pei191)).